The sequence spans 449 residues: Glutamyl-tRNA reductase (449 aa).

Substrate-binding positions include 58-61 (TCNR), S121, 126-128 (ETQ), and Q132. The active-site Nucleophile is C59. 203-208 (GLGEMA) contacts NADP(+).

The protein belongs to the glutamyl-tRNA reductase family. As to quaternary structure, homodimer.

The enzyme catalyses (S)-4-amino-5-oxopentanoate + tRNA(Glu) + NADP(+) = L-glutamyl-tRNA(Glu) + NADPH + H(+). It functions in the pathway porphyrin-containing compound metabolism; protoporphyrin-IX biosynthesis; 5-aminolevulinate from L-glutamyl-tRNA(Glu): step 1/2. Functionally, catalyzes the NADPH-dependent reduction of glutamyl-tRNA(Glu) to glutamate 1-semialdehyde (GSA). This chain is Glutamyl-tRNA reductase, found in Helicobacter pylori (strain HPAG1).